Here is a 95-residue protein sequence, read N- to C-terminus: UPF0213 protein YPA_2977 (95 aa).

Positions 4–79 (SLWHLYLLRT…KQLSKQQKEK (76 aa)) constitute a GIY-YIG domain.

The protein belongs to the UPF0213 family.

The polypeptide is UPF0213 protein YPA_2977 (Yersinia pestis bv. Antiqua (strain Antiqua)).